Here is a 368-residue protein sequence, read N- to C-terminus: Epoxyqueuosine reductase QueH (368 aa).

[4Fe-4S] cluster contacts are provided by C6, C7, C87, and C90. A disulfide bridge links C174 with C176.

Belongs to the QueH family.

It carries out the reaction epoxyqueuosine(34) in tRNA + AH2 = queuosine(34) in tRNA + A + H2O. The protein operates within tRNA modification; tRNA-queuosine biosynthesis. Functionally, catalyzes the conversion of epoxyqueuosine (oQ) to queuosine (Q), which is a hypermodified base found in the wobble positions of tRNA(Asp), tRNA(Asn), tRNA(His) and tRNA(Tyr). The chain is Epoxyqueuosine reductase QueH from Helicobacter pylori (strain ATCC 700392 / 26695) (Campylobacter pylori).